A 299-amino-acid chain; its full sequence is tRNA dimethylallyltransferase (299 aa).

An ATP-binding site is contributed by 10–17; that stretch reads GPTAVGKT. Substrate is bound at residue 12 to 17; that stretch reads TAVGKT. Residues 35 to 38 are interaction with substrate tRNA; sequence DSQQ.

This sequence belongs to the IPP transferase family. In terms of assembly, monomer. Mg(2+) serves as cofactor.

The enzyme catalyses adenosine(37) in tRNA + dimethylallyl diphosphate = N(6)-dimethylallyladenosine(37) in tRNA + diphosphate. Its function is as follows. Catalyzes the transfer of a dimethylallyl group onto the adenine at position 37 in tRNAs that read codons beginning with uridine, leading to the formation of N6-(dimethylallyl)adenosine (i(6)A). The protein is tRNA dimethylallyltransferase of Streptococcus thermophilus (strain CNRZ 1066).